Here is a 442-residue protein sequence, read N- to C-terminus: Trigger factor (442 aa).

Residues 162-247 (GDRMTFDFEG…VKAIESRELP (86 aa)) form the PPIase FKBP-type domain.

Belongs to the FKBP-type PPIase family. Tig subfamily.

It localises to the cytoplasm. It catalyses the reaction [protein]-peptidylproline (omega=180) = [protein]-peptidylproline (omega=0). In terms of biological role, involved in protein export. Acts as a chaperone by maintaining the newly synthesized protein in an open conformation. Functions as a peptidyl-prolyl cis-trans isomerase. In Magnetococcus marinus (strain ATCC BAA-1437 / JCM 17883 / MC-1), this protein is Trigger factor.